A 94-amino-acid chain; its full sequence is Large ribosomal subunit protein eL42 (94 aa).

Residues Cys-11, Cys-14, Cys-71, and Cys-74 each coordinate Zn(2+). The C4-type zinc finger occupies 11-74; that stretch reads CPFCKRHTIH…LDLRFRCTVC (64 aa).

This sequence belongs to the eukaryotic ribosomal protein eL42 family. In terms of assembly, part of the 50S ribosomal subunit. It depends on Zn(2+) as a cofactor.

Its function is as follows. Binds to the 23S rRNA. The sequence is that of Large ribosomal subunit protein eL42 from Thermococcus kodakarensis (strain ATCC BAA-918 / JCM 12380 / KOD1) (Pyrococcus kodakaraensis (strain KOD1)).